Here is a 988-residue protein sequence, read N- to C-terminus: Transcription regulator srbA precursor (988 aa).

Over 1-427 the chain is Cytoplasmic; the sequence is MSTPGIGGDF…SSWHARAISH (427 aa). 2 disordered regions span residues 53 to 85 and 108 to 169; these read AFPE…SDAM and GDLN…KKRA. The span at 125–136 shows a compositional bias: low complexity; that stretch reads SLSVHSNSPLSS. The tract at residues 165–178 is basic motif; sequence SKKRAHNVIEKRYR. The 72-residue stretch at 165-236 folds into the bHLH domain; that stretch reads SKKRAHNVIE…SKATEYIRHL (72 aa). The interval 179–236 is helix-loop-helix motif; sequence ANLNEKIAELRDSVPSLRASYKQANGNSGDDDDDGVTSASKLNKASILSKATEYIRHL. A coiled-coil region spans residues 226–260; that stretch reads LSKATEYIRHLEIRNKRLEEENTALKIRLRQLDKA. Polar residues predominate over residues 267–291; sequence SAASVSSPSDCTVSTESGASSSPSV. The tract at residues 267-313 is disordered; sequence SAASVSSPSDCTVSTESGASSSPSVFSHAEDVPSDHSPTSSHPPEGL. Residues 301–310 show a composition bias toward low complexity; the sequence is DHSPTSSHPP. Residues 428–447 form a helical membrane-spanning segment; sequence FLMLAILVVGSAFIVFVYLF. Residues 448-988 lie on the Lumenal side of the membrane; that stretch reads NSDPRRQYSA…SDNLLLSDES (541 aa). Residues 866–881 show a composition bias toward low complexity; it reads PPSPMSKASDMLSSSS. Residues 866-900 are disordered; that stretch reads PPSPMSKASDMLSSSSDDGEDGASQRNNNIIPHPM.

In terms of processing, in low oxygen or sterol conditions, undergoes proteolytic cleavage by rhomboid-type protease rbdB and is released as soluble transcription factor from the membrane.

The protein localises to the endoplasmic reticulum membrane. The protein resides in the nucleus. In terms of biological role, precursor of the transcription factor srbA, which is embedded in the endoplasmic reticulum membrane. Low oxygen or sterol conditions promote processing of this form, releasing the transcription factor form that translocates into the nucleus and activates transcription of genes required for adaptation to anaerobic growth. Transcription factor that regulates sterol biosynthesis and hyphal morphology. Plays a critical role in ergosterol biosynthesis, resistance to the azole class of antifungal drugs, and in maintenance of cell polarity. Directly binds erg11A/cyp51A upstream DNA sequence at tandem repeats, called TR34 and TR46, that produce duplicated binding sites. Also mediates regulation of iron acquisition in response to hypoxia and low iron conditions via activation of extra- and intracellular siderophore production. Positively regulates the expression of the other hypoxia adaptation key transcription factor srbB. Required for the azole-sensing and response to azole stress. Binds the high-affinity sites 5'-A-T-C-G/A-T/G-A/G-C/T-G/C-A-T-3' of target promoters. Required for virulence in murine models of invasive pulmonary aspergillosis (IPA). This is Transcription regulator srbA precursor from Aspergillus fumigatus (strain ATCC MYA-4609 / CBS 101355 / FGSC A1100 / Af293) (Neosartorya fumigata).